The following is a 605-amino-acid chain: Probable serine/threonine-protein kinase DDB_G0286481 (605 aa).

A helical membrane pass occupies residues 5–25 (YQIFFLLYLLCILYVISCGYI). N-linked (GlcNAc...) asparagine glycosylation is present at Asn-53. 2 stretches are compositionally biased toward low complexity: residues 54 to 81 (SSNNNNNNNNNNNNNNNNNNNNNNNNNN) and 89 to 104 (NCNNNSSNNNSDNKSN). Residues 54–170 (SSNNNNNNNN…LGGSMGSGSQ (117 aa)) form a disordered region. 4 N-linked (GlcNAc...) asparagine glycosylation sites follow: Asn-92, Asn-93, Asn-97, and Asn-101. The span at 105–123 (IKNKQHHHHSNFRNRRGKS) shows a compositional bias: basic residues. An N-linked (GlcNAc...) asparagine glycan is attached at Asn-127. Positions 144–155 (QSSSYDTSELHQ) are enriched in polar residues. The N-linked (GlcNAc...) asparagine glycan is linked to Asn-280. In terms of domain architecture, Protein kinase spans 312 to 597 (YEVIQKIGRG…AKEAMKHPYF (286 aa)). ATP-binding positions include 318 to 326 (IGRGKYSEV) and Lys-341. Asn-390 carries an N-linked (GlcNAc...) asparagine glycan. Asp-429 serves as the catalytic Proton acceptor. N-linked (GlcNAc...) asparagine glycosylation is present at Asn-601.

The protein belongs to the protein kinase superfamily. CMGC Ser/Thr protein kinase family.

The protein localises to the membrane. The enzyme catalyses L-seryl-[protein] + ATP = O-phospho-L-seryl-[protein] + ADP + H(+). It catalyses the reaction L-threonyl-[protein] + ATP = O-phospho-L-threonyl-[protein] + ADP + H(+). This Dictyostelium discoideum (Social amoeba) protein is Probable serine/threonine-protein kinase DDB_G0286481.